We begin with the raw amino-acid sequence, 275 residues long: Ribosomal RNA small subunit methyltransferase A (275 aa).

6 residues coordinate S-adenosyl-L-methionine: asparagine 15, leucine 17, glycine 42, glutamate 63, aspartate 88, and asparagine 111.

The protein belongs to the class I-like SAM-binding methyltransferase superfamily. rRNA adenine N(6)-methyltransferase family. RsmA subfamily.

It localises to the cytoplasm. It catalyses the reaction adenosine(1518)/adenosine(1519) in 16S rRNA + 4 S-adenosyl-L-methionine = N(6)-dimethyladenosine(1518)/N(6)-dimethyladenosine(1519) in 16S rRNA + 4 S-adenosyl-L-homocysteine + 4 H(+). Specifically dimethylates two adjacent adenosines (A1518 and A1519) in the loop of a conserved hairpin near the 3'-end of 16S rRNA in the 30S particle. May play a critical role in biogenesis of 30S subunits. The sequence is that of Ribosomal RNA small subunit methyltransferase A from Geobacter metallireducens (strain ATCC 53774 / DSM 7210 / GS-15).